We begin with the raw amino-acid sequence, 112 residues long: Omega-agatoxin-1A (112 aa).

The first 19 residues, 1–19, serve as a signal peptide directing secretion; that stretch reads MMKFVVFLACLFVAAHSFA. A propeptide spanning residues 20-36 is cleaved from the precursor; the sequence is VEGEEEYFEAEVPELER. A propeptide spans 103–109 (glu-rich); that stretch reads RSEESER.

This sequence belongs to the neurotoxin 04 (omega-agtx) family. 01 (type I omega-agtx) subfamily. Heterodimer of two subunits, a major chain and a minor chain, linked by a disulfide bond. Post-translationally, proteolytically processed to yield the major and the minor chains. Expressed by the venom gland.

It localises to the secreted. Functionally, omega-agatoxins are antagonists of voltage-gated calcium channels. They block insect neuromuscular transmission presynaptically. This toxin is a blocker of L-type calcium channels (Cav/CACNA1). This is Omega-agatoxin-1A from Agelenopsis aperta (North American funnel-web spider).